A 619-amino-acid polypeptide reads, in one-letter code: MPKNKILIYLLSTTLVLPTLVSPTAYADTPQKDTTAKTTSHDSKKSNDDETSKDTTSKDIDKADKNNTSNQDNNDKKFKTIDDSTSDSNNIIDFIYKNLPQTNINQLLTKNKYDDNYSLTTLIQNLFNLNSDISDYEQPRNGEKSTNDSNKNSDNSIKNDTDTQSSKQDKADNQKAPKSNNTKPSTSNKQPNSPKPTQPNQSNSQPASDDKANQKSSSKDNQSMSDSALDSILDQYSEDAKKTQKDYASQSKKDKNEKSNTKNPQLPTQDELKHKSKPAQSFNNDVNQKDTRATSLFETDPSISNNDDSGQFNVVDSKDTRQFVKSIAKDAHRIGQDNDIYASVMIAQAILESDSGRSALAKSPNHNLFGIKGAFEGNSVPFNTLEADGNQLYSINAGFRKYPSTKESLKDYSDLIKNGIDGNRTIYKPTWKSEADSYKDATSHLSKTYATDPNYAKKLNSIIKHYQLTQFDDERMPDLDKYERSIKDYDDSSDEFKPFREVSDSMPYPHGQCTWYVYNRMKQFGTSISGDLGDAHNWNNRAQYRDYQVSHTPKRHAAVVFEAGQFGADQHYGHVAFVEKVNSDGSIVISESNVKGLGIISHRTINAAAAEELSYITGK.

An N-terminal signal peptide occupies residues 1 to 27; that stretch reads MPKNKILIYLLSTTLVLPTLVSPTAYA. 3 disordered regions span residues 25-83, 134-226, and 238-290; these read AYAD…TIDD, SDYE…SMSD, and EDAK…NQKD. 3 stretches are compositionally biased toward basic and acidic residues: residues 30-65, 73-82, and 137-146; these read PQKD…KADK, NNDKKFKTID, and EQPRNGEKST. Residues 147 to 156 show a composition bias toward low complexity; the sequence is NDSNKNSDNS. The segment covering 157-175 has biased composition (basic and acidic residues); the sequence is IKNDTDTQSSKQDKADNQK. Residues 176-192 show a composition bias toward polar residues; the sequence is APKSNNTKPSTSNKQPN. A compositionally biased stretch (low complexity) spans 214–226; that stretch reads QKSSSKDNQSMSD. Positions 238–260 are enriched in basic and acidic residues; that stretch reads EDAKKTQKDYASQSKKDKNEKSN. The tract at residues 327–468 is N-acetylmuramoyl-L-alanine amidase; it reads IAKDAHRIGQ…LNSIIKHYQL (142 aa). Residues 488 to 617 form the Peptidase C51 domain; the sequence is DYDDSSDEFK…AAAEELSYIT (130 aa).

The protein in the N-terminal section; belongs to the N-acetylmuramoyl-L-alanine amidase 2 family.

The protein localises to the secreted. In Staphylococcus aureus (strain NCTC 8325 / PS 47), this protein is N-acetylmuramoyl-L-alanine amidase domain-containing protein SAOUHSC_02979.